The following is a 677-amino-acid chain: Threonine--tRNA ligase (677 aa).

A TGS domain is found at methionine 1–alanine 59. The tract at residues aspartate 255–proline 561 is catalytic. Zn(2+)-binding residues include cysteine 360, histidine 411, and histidine 538.

This sequence belongs to the class-II aminoacyl-tRNA synthetase family. As to quaternary structure, homodimer. The cofactor is Zn(2+).

It localises to the cytoplasm. It carries out the reaction tRNA(Thr) + L-threonine + ATP = L-threonyl-tRNA(Thr) + AMP + diphosphate + H(+). Its function is as follows. Catalyzes the attachment of threonine to tRNA(Thr) in a two-step reaction: L-threonine is first activated by ATP to form Thr-AMP and then transferred to the acceptor end of tRNA(Thr). Also edits incorrectly charged L-seryl-tRNA(Thr). In Bifidobacterium longum (strain NCC 2705), this protein is Threonine--tRNA ligase.